The following is an 88-amino-acid chain: HssA/B-like protein 13 (88 aa).

This sequence belongs to the hssA/B family.

This is HssA/B-like protein 13 (hssl13) from Dictyostelium discoideum (Social amoeba).